A 403-amino-acid polypeptide reads, in one-letter code: Na(+)-translocating NADH-quinone reductase subunit B (403 aa).

9 consecutive transmembrane segments (helical) span residues 56–76, 121–141, 164–184, 225–245, 260–280, 287–307, 312–332, 348–368, and 371–391; these read MMIIVWLCTFPAMFFGMYNVG, AYFLPVYLTTFIVGGFWEVLF, LPPSVPLWQVALGISFGVVLG, GFAGATSLSLAAAGGVDNILG, GSMGETSTLAIFIGGAVLLLT, IVAGVMLGMIAMSYLFNAIGS, MFAMPWYWHLVTGGFAFGMIF, WLFGALIGVMVMLIRVVNPAF, and GMMLAILFANLFAPLIDHFVV. An FMN phosphoryl threonine modification is found at threonine 230.

It belongs to the NqrB/RnfD family. Composed of six subunits; NqrA, NqrB, NqrC, NqrD, NqrE and NqrF. FMN is required as a cofactor.

The protein resides in the cell inner membrane. The catalysed reaction is a ubiquinone + n Na(+)(in) + NADH + H(+) = a ubiquinol + n Na(+)(out) + NAD(+). Functionally, NQR complex catalyzes the reduction of ubiquinone-1 to ubiquinol by two successive reactions, coupled with the transport of Na(+) ions from the cytoplasm to the periplasm. NqrA to NqrE are probably involved in the second step, the conversion of ubisemiquinone to ubiquinol. In Pseudomonas paraeruginosa (strain DSM 24068 / PA7) (Pseudomonas aeruginosa (strain PA7)), this protein is Na(+)-translocating NADH-quinone reductase subunit B.